Reading from the N-terminus, the 389-residue chain is NADH-quinone oxidoreductase subunit D (389 aa).

Belongs to the complex I 49 kDa subunit family. NDH-1 is composed of 14 different subunits. Subunits NuoB, C, D, E, F, and G constitute the peripheral sector of the complex.

The protein resides in the cell inner membrane. The enzyme catalyses a quinone + NADH + 5 H(+)(in) = a quinol + NAD(+) + 4 H(+)(out). NDH-1 shuttles electrons from NADH, via FMN and iron-sulfur (Fe-S) centers, to quinones in the respiratory chain. The immediate electron acceptor for the enzyme in this species is believed to be ubiquinone. Couples the redox reaction to proton translocation (for every two electrons transferred, four hydrogen ions are translocated across the cytoplasmic membrane), and thus conserves the redox energy in a proton gradient. The sequence is that of NADH-quinone oxidoreductase subunit D from Rickettsia typhi (strain ATCC VR-144 / Wilmington).